Reading from the N-terminus, the 238-residue chain is tRNA (guanine-N(7)-)-methyltransferase (238 aa).

S-adenosyl-L-methionine-binding residues include Glu-62, Glu-87, Asp-119, and Asp-141. Asp-141 is a catalytic residue. Residues Lys-145, Asp-177, and 216 to 219 (TRYE) each bind substrate.

This sequence belongs to the class I-like SAM-binding methyltransferase superfamily. TrmB family.

The catalysed reaction is guanosine(46) in tRNA + S-adenosyl-L-methionine = N(7)-methylguanosine(46) in tRNA + S-adenosyl-L-homocysteine. It participates in tRNA modification; N(7)-methylguanine-tRNA biosynthesis. In terms of biological role, catalyzes the formation of N(7)-methylguanine at position 46 (m7G46) in tRNA. This chain is tRNA (guanine-N(7)-)-methyltransferase, found in Novosphingobium aromaticivorans (strain ATCC 700278 / DSM 12444 / CCUG 56034 / CIP 105152 / NBRC 16084 / F199).